Consider the following 316-residue polypeptide: Beta-ketoacyl-[acyl-carrier-protein] synthase III 1 (316 aa).

Catalysis depends on residues cysteine 112 and histidine 243. Residues 244 to 248 (QANYR) are ACP-binding. The active site involves asparagine 273.

The protein belongs to the thiolase-like superfamily. FabH family. Homodimer.

Its subcellular location is the cytoplasm. The catalysed reaction is malonyl-[ACP] + acetyl-CoA + H(+) = 3-oxobutanoyl-[ACP] + CO2 + CoA. The protein operates within lipid metabolism; fatty acid biosynthesis. Catalyzes the condensation reaction of fatty acid synthesis by the addition to an acyl acceptor of two carbons from malonyl-ACP. Catalyzes the first condensation reaction which initiates fatty acid synthesis and may therefore play a role in governing the total rate of fatty acid production. Possesses both acetoacetyl-ACP synthase and acetyl transacylase activities. Its substrate specificity determines the biosynthesis of branched-chain and/or straight-chain of fatty acids. The protein is Beta-ketoacyl-[acyl-carrier-protein] synthase III 1 of Vibrio cholerae serotype O1 (strain ATCC 39315 / El Tor Inaba N16961).